Here is a 320-residue protein sequence, read N- to C-terminus: Acetyl-coenzyme A carboxylase carboxyl transferase subunit alpha (320 aa).

One can recognise a CoA carboxyltransferase C-terminal domain in the interval 42-295 (IEEKAVQALN…GDAIAAAFAE (254 aa)).

This sequence belongs to the AccA family. In terms of assembly, acetyl-CoA carboxylase is a heterohexamer composed of biotin carboxyl carrier protein (AccB), biotin carboxylase (AccC) and two subunits each of ACCase subunit alpha (AccA) and ACCase subunit beta (AccD).

Its subcellular location is the cytoplasm. The catalysed reaction is N(6)-carboxybiotinyl-L-lysyl-[protein] + acetyl-CoA = N(6)-biotinyl-L-lysyl-[protein] + malonyl-CoA. It participates in lipid metabolism; malonyl-CoA biosynthesis; malonyl-CoA from acetyl-CoA: step 1/1. In terms of biological role, component of the acetyl coenzyme A carboxylase (ACC) complex. First, biotin carboxylase catalyzes the carboxylation of biotin on its carrier protein (BCCP) and then the CO(2) group is transferred by the carboxyltransferase to acetyl-CoA to form malonyl-CoA. The protein is Acetyl-coenzyme A carboxylase carboxyl transferase subunit alpha of Rhodopseudomonas palustris (strain HaA2).